The chain runs to 109 residues: Small ribosomal subunit protein uS10c (109 aa).

It belongs to the universal ribosomal protein uS10 family. In terms of assembly, part of the 30S ribosomal subunit.

The protein resides in the plastid. It is found in the chloroplast. Involved in the binding of tRNA to the ribosomes. The protein is Small ribosomal subunit protein uS10c of Cyanidium caldarium (Red alga).